Consider the following 300-residue polypeptide: Protoheme IX farnesyltransferase (300 aa).

9 consecutive transmembrane segments (helical) span residues 20–40, 49–69, 97–117, 122–142, 145–165, 176–196, 217–237, 242–262, and 278–298; these read ITKAGLAISVLFSSIAGYLLG, WSVLIVLAIGGYCMVGASNAY, VTALIVASLLTIIGIVLLYTI, AMFAAISIFLYTSIYTPLKTV, LSVFVGAFPGAIPFMLGWVAA, LFLIQFFWQFPHFWSIGWFLY, ALQVILYTIWLIIASLLPVLG, LFISPVAAVLVFLLGLWMLFY, and LMLVSVSYISLLQIVFIVDKF.

This sequence belongs to the UbiA prenyltransferase family. Protoheme IX farnesyltransferase subfamily.

It localises to the cell inner membrane. The catalysed reaction is heme b + (2E,6E)-farnesyl diphosphate + H2O = Fe(II)-heme o + diphosphate. The protein operates within porphyrin-containing compound metabolism; heme O biosynthesis; heme O from protoheme: step 1/1. Its function is as follows. Converts heme B (protoheme IX) to heme O by substitution of the vinyl group on carbon 2 of heme B porphyrin ring with a hydroxyethyl farnesyl side group. This Flavobacterium johnsoniae (strain ATCC 17061 / DSM 2064 / JCM 8514 / BCRC 14874 / CCUG 350202 / NBRC 14942 / NCIMB 11054 / UW101) (Cytophaga johnsonae) protein is Protoheme IX farnesyltransferase.